We begin with the raw amino-acid sequence, 129 residues long: Histone H2A-III (129 aa).

The interval 1-22 (MSGRGKQGGKARAKAKSRSSRA) is disordered. Residue Ser-2 is modified to N-acetylserine. Residue Ser-2 is modified to Phosphoserine. An N6-(2-hydroxyisobutyryl)lysine modification is found at Lys-6. 2 positions are modified to N6-acetyllysine: Lys-6 and Lys-10. The segment covering 7–19 (QGGKARAKAKSRS) has biased composition (basic residues). The residue at position 10 (Lys-10) is an N6-(2-hydroxyisobutyryl)lysine; alternate. Lys-10 carries the N6-lactoyllysine; alternate modification. Lys-10 carries the N6-succinyllysine modification. Residues Lys-14 and Lys-16 each participate in a glycyl lysine isopeptide (Lys-Gly) (interchain with G-Cter in ubiquitin) cross-link. N6-(2-hydroxyisobutyryl)lysine; alternate is present on Lys-37. N6-(2-hydroxyisobutyryl)lysine is present on residues Lys-75 and Lys-76. Lys-96 is subject to N6-(2-hydroxyisobutyryl)lysine; alternate. N6-succinyllysine is present on Lys-96. At Lys-96 the chain carries N6-glutaryllysine; alternate. Lys-100 is subject to N6-glutaryllysine. Gln-105 bears the N5-methylglutamine mark. The residue at position 119 (Lys-119) is an N6-(2-hydroxyisobutyryl)lysine; alternate. Residues Lys-119 and Lys-120 each carry the N6-glutaryllysine; alternate modification. Lys-120 participates in a covalent cross-link: Glycyl lysine isopeptide (Lys-Gly) (interchain with G-Cter in ubiquitin).

This sequence belongs to the histone H2A family. In terms of assembly, the nucleosome is a histone octamer containing two molecules each of H2A, H2B, H3 and H4 assembled in one H3-H4 heterotetramer and two H2A-H2B heterodimers. The octamer wraps approximately 147 bp of DNA. Monoubiquitination of Lys-120 (H2AK119Ub) gives a specific tag for epigenetic transcriptional repression. Following DNA double-strand breaks (DSBs), it is ubiquitinated through 'Lys-63' linkage of ubiquitin moieties, leading to the recruitment of repair proteins to sites of DNA damage. H2AK119Ub and ionizing radiation-induced 'Lys-63'-linked ubiquitination are distinct events. Post-translationally, phosphorylation on Ser-2 is enhanced during mitosis. Phosphorylation on Ser-2 directly represses transcription. In terms of processing, glutamine methylation at Gln-105 (H2AQ104me) by FBL is specifically dedicated to polymerase I. It is present at 35S ribosomal DNA locus and impairs binding of the FACT complex.

The protein resides in the nucleus. The protein localises to the chromosome. Functionally, core component of nucleosome. Nucleosomes wrap and compact DNA into chromatin, limiting DNA accessibility to the cellular machineries which require DNA as a template. Histones thereby play a central role in transcription regulation, DNA repair, DNA replication and chromosomal stability. DNA accessibility is regulated via a complex set of post-translational modifications of histones, also called histone code, and nucleosome remodeling. The sequence is that of Histone H2A-III from Gallus gallus (Chicken).